Here is a 240-residue protein sequence, read N- to C-terminus: MIAFIVLPILAAVLQQSSGNVDFDSESPRKPEIQNEIIDLHNSLRRSVNPTASNMLKMEWYPEAAANAERWAYRCIESHSSRDSRVIGGIKCGENIYMATYPAKWTDIIHAWHGEYKDFKYGVGAVPSDAVIGHYTQIVWYKSYRAGCAAAYCPSSKYSYFYVCQYCPAGNIIGKTATPYKSGPPCGDCPSDCDNGLCTNPCTRENEFTNCDSLVQKSSCQDNYMKSKCPASCFCQNKII.

Positions 1–19 (MIAFIVLPILAAVLQQSSG) are cleaved as a signal peptide. The SCP domain maps to 39–166 (DLHNSLRRSV…KYSYFYVCQY (128 aa)). 8 disulfide bridges follow: Cys-75–Cys-153, Cys-92–Cys-167, Cys-148–Cys-164, Cys-186–Cys-193, Cys-189–Cys-198, Cys-202–Cys-235, Cys-211–Cys-229, and Cys-220–Cys-233. In terms of domain architecture, ShKT spans 202–235 (CTRENEFTNCDSLVQKSSCQDNYMKSKCPASCFC).

Belongs to the CRISP family. As to quaternary structure, forms a stable, non-covalent complex with SSP-2. In terms of tissue distribution, expressed by the venom gland.

It localises to the secreted. Blocks contraction of smooth muscle elicited by high potassium-induced depolarization. May target voltage-gated calcium channels (Cav) on smooth muscle. The polypeptide is Cysteine-rich venom protein triflin (Protobothrops flavoviridis (Habu)).